Reading from the N-terminus, the 492-residue chain is Protein nucleotidyltransferase YdiU (492 aa).

ATP contacts are provided by G94, G96, R97, K117, D129, G130, R180, and R187. The Proton acceptor role is filled by D257. Positions 258 and 267 each coordinate Mg(2+). Residue D267 coordinates ATP.

Belongs to the SELO family. The cofactor is Mg(2+). Requires Mn(2+) as cofactor.

It carries out the reaction L-seryl-[protein] + ATP = 3-O-(5'-adenylyl)-L-seryl-[protein] + diphosphate. The enzyme catalyses L-threonyl-[protein] + ATP = 3-O-(5'-adenylyl)-L-threonyl-[protein] + diphosphate. The catalysed reaction is L-tyrosyl-[protein] + ATP = O-(5'-adenylyl)-L-tyrosyl-[protein] + diphosphate. It catalyses the reaction L-histidyl-[protein] + UTP = N(tele)-(5'-uridylyl)-L-histidyl-[protein] + diphosphate. It carries out the reaction L-seryl-[protein] + UTP = O-(5'-uridylyl)-L-seryl-[protein] + diphosphate. The enzyme catalyses L-tyrosyl-[protein] + UTP = O-(5'-uridylyl)-L-tyrosyl-[protein] + diphosphate. Functionally, nucleotidyltransferase involved in the post-translational modification of proteins. It can catalyze the addition of adenosine monophosphate (AMP) or uridine monophosphate (UMP) to a protein, resulting in modifications known as AMPylation and UMPylation. This is Protein nucleotidyltransferase YdiU from Halalkalibacterium halodurans (strain ATCC BAA-125 / DSM 18197 / FERM 7344 / JCM 9153 / C-125) (Bacillus halodurans).